The primary structure comprises 320 residues: tRNA U34 carboxymethyltransferase (320 aa).

Residues Lys87, Trp101, Lys106, Gly126, 148 to 150, 176 to 177, Met192, Tyr196, and Arg311 contribute to the carboxy-S-adenosyl-L-methionine site; these read EPS and VE.

The protein belongs to the class I-like SAM-binding methyltransferase superfamily. CmoB family. As to quaternary structure, homotetramer.

It carries out the reaction carboxy-S-adenosyl-L-methionine + 5-hydroxyuridine(34) in tRNA = 5-carboxymethoxyuridine(34) in tRNA + S-adenosyl-L-homocysteine + H(+). Catalyzes carboxymethyl transfer from carboxy-S-adenosyl-L-methionine (Cx-SAM) to 5-hydroxyuridine (ho5U) to form 5-carboxymethoxyuridine (cmo5U) at position 34 in tRNAs. The polypeptide is tRNA U34 carboxymethyltransferase (Desulfotalea psychrophila (strain LSv54 / DSM 12343)).